We begin with the raw amino-acid sequence, 394 residues long: Short-chain dehydrogenase/reductase family 42E member 1 (394 aa).

Tyr-153 functions as the Proton acceptor in the catalytic mechanism. Lys-157 is a binding site for NAD(+). 2 helical membrane passes run 283–303 and 367–387; these read LPLTLIYCLAFLVEMTHFIVG and FMLWDGILILLLALSVLTWIL.

The protein belongs to the 3-beta-HSD family.

The protein localises to the membrane. The sequence is that of Short-chain dehydrogenase/reductase family 42E member 1 (Sdr42e1) from Mus musculus (Mouse).